We begin with the raw amino-acid sequence, 234 residues long: LexA repressor (234 aa).

Residues 1–11 show a composition bias toward basic and acidic residues; the sequence is MNEATSHEGPK. The tract at residues 1 to 34 is disordered; sequence MNEATSHEGPKRSLPGRPPGIRADSSGLTDRQRR. Positions 52–72 form a DNA-binding region, H-T-H motif; that stretch reads MREIGQAVGLSSTSSVAHQLM. The span at 83–94 shows a compositional bias: basic and acidic residues; that stretch reads DPHRPRAYEVRG. Residues 83–109 are disordered; it reads DPHRPRAYEVRGSDQSSSVQPTDTAGK. The span at 95-105 shows a compositional bias: polar residues; the sequence is SDQSSSVQPTD. Residues Ser-158 and Lys-195 each act as for autocatalytic cleavage activity in the active site.

This sequence belongs to the peptidase S24 family. Homodimer.

It carries out the reaction Hydrolysis of Ala-|-Gly bond in repressor LexA.. Its function is as follows. Represses a number of genes involved in the response to DNA damage (SOS response), including recA and lexA. In the presence of single-stranded DNA, RecA interacts with LexA causing an autocatalytic cleavage which disrupts the DNA-binding part of LexA, leading to derepression of the SOS regulon and eventually DNA repair. The protein is LexA repressor of Streptomyces avermitilis (strain ATCC 31267 / DSM 46492 / JCM 5070 / NBRC 14893 / NCIMB 12804 / NRRL 8165 / MA-4680).